Reading from the N-terminus, the 600-residue chain is DDB1- and CUL4-associated factor 15 (600 aa).

Residues 1 to 29 (MAPSSKSERNSGAGSAGGGPGGTGGKRAV) form a disordered region. Over residues 14–27 (GSAGGGPGGTGGKR) the composition is skewed to gly residues. Serine 50 is subject to Phosphoserine. Zn(2+)-binding residues include cysteine 193, cysteine 196, cysteine 211, and histidine 214. Position 314 is a phosphoserine (serine 314). The span at 334–343 (AKGSPLEETR) shows a compositional bias: basic and acidic residues. A disordered region spans residues 334–384 (AKGSPLEETRLPSSLGPSSSRCRPSLEPQAPSGEVVPRDSPPAAETTAPEP). Low complexity-rich tracts occupy residues 344-359 (LPSSLGPSSSRCRPSL) and 374-384 (PPAAETTAPEP).

In terms of assembly, component of the DCX(DCAF15) complex, also named CLR4(DCAF15) complex, composed of DCAF15, DDB1, cullin-4 (CUL4A or CUL4B), DDA1 and RBX1.

It functions in the pathway protein modification; protein ubiquitination. Substrate-recognition component of the DCX(DCAF15) complex, a cullin-4-RING E3 ubiquitin-protein ligase complex that mediates ubiquitination and degradation of target proteins. The DCX(DCAF15) complex acts as a regulator of the natural killer (NK) cells effector functions, possibly by mediating ubiquitination and degradation of cohesin subunits SMC1A and SMC3. May play a role in the activation of antigen-presenting cells (APC) and their interaction with NK cells. The sequence is that of DDB1- and CUL4-associated factor 15 from Mus musculus (Mouse).